Here is a 795-residue protein sequence, read N- to C-terminus: Nucleolar complex protein 3 homolog (795 aa).

Disordered regions lie at residues 1 to 88 (MKPM…PLDM), 124 to 144 (RDDVINKYEKMPRKSKSEPEK), and 168 to 190 (IPSEEQEENEEEMDTEHTEEVPE). Basic and acidic residues-rich tracts occupy residues 22–39 (LKLDNKLKNKQFKQESSA) and 46–58 (QKQLREAVRDVRS). Acidic residues predominate over residues 74–88 (EEEYEVEEESLPLDM). The segment covering 171 to 181 (EEQEENEEEMD) has biased composition (acidic residues). A coiled-coil region spans residues 447–492 (SYKDKKKNLSRMQRKWKKAEEKLERELLEAEASESKEKKLKLNTET).

This sequence belongs to the CBF/MAK21 family.

It localises to the nucleus. It is found in the nucleolus. The polypeptide is Nucleolar complex protein 3 homolog (noc3l) (Xenopus laevis (African clawed frog)).